We begin with the raw amino-acid sequence, 1087 residues long: 2'-5'-oligoadenylate synthase 3 (1087 aa).

At methionine 1 the chain carries N-acetylmethionine. The interval 6–343 (TPAAALDRFV…GDPVQSWKGP (338 aa)) is OAS domain 1. Interaction with dsRNA regions lie at residues 12 to 57 (DRFV…VLKT) and 186 to 200 (ELRR…AKLK). The tract at residues 344–410 (GLPRAGCSGL…VPGMALDLSQ (67 aa)) is linker. At threonine 365 the chain carries Phosphothreonine. OAS domain stretches follow at residues 411–742 (IPTK…PWDV) and 750–1084 (TPAG…WPVK). Residue serine 804 coordinates ATP. Mg(2+)-binding residues include aspartate 816, aspartate 818, and aspartate 888. ATP contacts are provided by arginine 947, lysine 950, and glutamine 969.

This sequence belongs to the 2-5A synthase family. As to quaternary structure, monomer. It depends on Mg(2+) as a cofactor. Present at high level in placenta trophoblast.

It localises to the cytoplasm. It is found in the nucleus. The enzyme catalyses 3 ATP = 5'-triphosphoadenylyl-(2'-&gt;5')-adenylyl-(2'-&gt;5')-adenosine + 2 diphosphate. With respect to regulation, produced as a latent enzyme which is activated by dsRNA generated during the course of viral infection. Strongly activated by long dsRNAs at least 50 nucleotides in length. ssRNA does not activate the enzyme. In terms of biological role, interferon-induced, dsRNA-activated antiviral enzyme which plays a critical role in cellular innate antiviral response. In addition, it may also play a role in other cellular processes such as apoptosis, cell growth, differentiation and gene regulation. Synthesizes preferentially dimers of 2'-5'-oligoadenylates (2-5A) from ATP which then bind to the inactive monomeric form of ribonuclease L (RNase L) leading to its dimerization and subsequent activation. Activation of RNase L leads to degradation of cellular as well as viral RNA, resulting in the inhibition of protein synthesis, thus terminating viral replication. Can mediate the antiviral effect via the classical RNase L-dependent pathway or an alternative antiviral pathway independent of RNase L. Displays antiviral activity against Chikungunya virus (CHIKV), Dengue virus, Sindbis virus (SINV) and Semliki forest virus (SFV). The polypeptide is 2'-5'-oligoadenylate synthase 3 (OAS3) (Homo sapiens (Human)).